Reading from the N-terminus, the 435-residue chain is Phospholipase A1 EG1, chloroplastic/mitochondrial (435 aa).

A chloroplast and mitochondrion-targeting transit peptide spans 1 to 31 (MTLPRQCAAACRTGGGGGGVVRCRAVAAAGG). A GXSXG motif is present at residues 264-268 (GHSMG). S266 (acyl-ester intermediate) is an active-site residue. Catalysis depends on charge relay system residues D324 and H371.

It belongs to the AB hydrolase superfamily. Lipase family.

It localises to the mitochondrion. The protein resides in the plastid. It is found in the chloroplast. The catalysed reaction is a 1,2-diacyl-sn-glycero-3-phosphocholine + H2O = a 2-acyl-sn-glycero-3-phosphocholine + a fatty acid + H(+). Functionally, phospholipase that releases free fatty acids from phospholipids. Catalyzes the initial step of jasmonate (JA) biosynthesis. Required for the biosynthesis of endogenous JA in seedling, inflorescence and spikelets. Not essential for JA biosynthesis after wounding. Mediates spikelet development and specification of empty-glume identity. Functions in a high temperature-dependent manner to maintain floral developmental robustness under heat stress conditions. Functions by safeguarding the expression of several floral identity genes, such as MADS1, MADS6 and G1. This chain is Phospholipase A1 EG1, chloroplastic/mitochondrial, found in Oryza sativa subsp. indica (Rice).